A 262-amino-acid polypeptide reads, in one-letter code: Small ribosomal subunit protein mS23 (262 aa).

Residues 242-254 show a composition bias toward acidic residues; sequence AAEEQETSLDDDA. The tract at residues 242–262 is disordered; that stretch reads AAEEQETSLDDDATEKVAVAA.

The protein belongs to the mitochondrion-specific ribosomal protein mS23 family. Component of the mitochondrial small ribosomal subunit.

The protein localises to the mitochondrion. This chain is Small ribosomal subunit protein mS23 (rsm25), found in Aspergillus niger (strain ATCC MYA-4892 / CBS 513.88 / FGSC A1513).